Reading from the N-terminus, the 234-residue chain is Large ribosomal subunit protein uL1 (234 aa).

The protein belongs to the universal ribosomal protein uL1 family. As to quaternary structure, part of the 50S ribosomal subunit.

Functionally, binds directly to 23S rRNA. The L1 stalk is quite mobile in the ribosome, and is involved in E site tRNA release. In terms of biological role, protein L1 is also a translational repressor protein, it controls the translation of the L11 operon by binding to its mRNA. In Serratia marcescens, this protein is Large ribosomal subunit protein uL1.